The sequence spans 446 residues: Divalent metal cation transporter MntH (446 aa).

A run of 11 helical transmembrane segments spans residues 32–52, 59–79, 107–127, 139–159, 168–188, 205–225, 264–284, 303–323, 355–375, 381–401, and 420–440; these read LAFL…GNWI, AQFG…AMLL, AIIF…AEVI, IPLI…LFIM, AIVG…VYIS, IIAN…TIMP, SIAF…FYGV, PVLG…ALLA, LVTR…FRGN, QLLV…LIPL, and VNIC…YLII.

It belongs to the NRAMP family.

It is found in the cell membrane. Its function is as follows. H(+)-stimulated, divalent metal cation uptake system. The sequence is that of Divalent metal cation transporter MntH from Staphylococcus haemolyticus (strain JCSC1435).